A 648-amino-acid polypeptide reads, in one-letter code: S-M checkpoint control protein rad4 (648 aa).

BRCT domains follow at residues Gly2–Leu92 and Lys96–Leu185. The short motif at Lys242 to Arg249 is the Nuclear localization signal element. BRCT domains lie at Asn298–Leu384 and Ser392–Ala486. Ser592 bears the Phosphoserine mark. Residues Arg643–Arg648 carry the Nuclear localization signal motif.

In terms of assembly, interacts with drc1/sld2. Interacts (via BRCT1,2 domains) with crb2; a single rad4 molecule interacts simultaneously with both 'Thr-187' phosphorylation sites in a crb2 dimer.

The protein resides in the nucleus. Functionally, essential component for DNA replication and also the checkpoint control system which couples S and M phases. May directly or indirectly interact with chromatin proteins to form the complex required for the initiation and/or progression of DNA synthesis. Interacts simultaneously with both 'Thr-187' phosphorylation sites in a crb2 dimer for establishing the DNA checkpoint. The sequence is that of S-M checkpoint control protein rad4 (rad4) from Schizosaccharomyces pombe (strain 972 / ATCC 24843) (Fission yeast).